The primary structure comprises 873 residues: F-box only protein 41 (873 aa).

Positions 85-97 are enriched in polar residues; sequence ESTSFQGKEQATG. Disordered regions lie at residues 85–110, 163–193, and 345–540; these read ESTSFQGKEQATGPSPAGPHLLHHHH, SSACSTPPPGPGPGPCSGPSSASPASPSPAD, and SSSC…PSRS. Residues 168-178 show a composition bias toward pro residues; the sequence is TPPPGPGPGPC. Positions 179–192 are enriched in low complexity; the sequence is SGPSSASPASPSPA. Residues 207 to 349 adopt a coiled-coil conformation; that stretch reads ALEKLEVDRR…QLQVISSSCG (143 aa). Residues 357–371 show a composition bias toward gly residues; that stretch reads GRGGGGSASGPGVRG. The residue at position 358 (Arg358) is an Omega-N-methylarginine. 2 stretches are compositionally biased toward polar residues: residues 384 to 414 and 442 to 456; these read VPSTYAVSRHGSSPSTGASSRVPAASQSSGC and AQATNGGSERSQAPR. Residue Ser476 is modified to Phosphoserine. Thr477 carries the phosphothreonine modification. The 45-residue stretch at 548-592 folds into the F-box domain; sequence ILKMRAALFCIFTYLDTRTLLHAAEVCRDWRFVARHPAVWTRVLL. A Phosphoserine modification is found at Ser760.

As to quaternary structure, directly interacts with SKP1 and CUL1.

Functionally, substrate-recognition component of the SCF (SKP1-CUL1-F-box protein)-type E3 ubiquitin ligase complex. This chain is F-box only protein 41 (Fbxo41), found in Mus musculus (Mouse).